The following is a 230-amino-acid chain: MDDKSYYEEIESILRQILQPIEKISFSTFIRVVSGYKIIPIDLSKKEDKELINDLAKACNEVIEEIKKTGGVKTKEGKTPKRVNEVGNHIEHYVKDVLNKYGYAITPKTKKGKQKSTGYPDIEFWYKGKKERDGRVVYIEIKTFNEKNINSSHRTFYASPSKDEEGVKIRYDAPHLCLSFKIEKLGRDYYATGFKIIDLSKLKGGIKREFNASNRELYKKDLIIYEKDLK.

It carries out the reaction Endonucleolytic cleavage of DNA to give specific double-stranded fragments with terminal 5'-phosphates.. Its function is as follows. A P subtype restriction enzyme that recognizes the double-stranded sequence 5'-GTAC-3'; the cleavage site is unknown. The polypeptide is Type II restriction enzyme MjaV (mjaVR) (Methanocaldococcus jannaschii (strain ATCC 43067 / DSM 2661 / JAL-1 / JCM 10045 / NBRC 100440) (Methanococcus jannaschii)).